A 466-amino-acid polypeptide reads, in one-letter code: Glutamate--tRNA ligase (466 aa).

The short motif at 10 to 20 (PSPTGFLHIGG) is the 'HIGH' region element. The 'KMSKS' region signature appears at 252–256 (KLSKR). An ATP-binding site is contributed by Lys-255.

It belongs to the class-I aminoacyl-tRNA synthetase family. Glutamate--tRNA ligase type 1 subfamily. As to quaternary structure, monomer.

It is found in the cytoplasm. It catalyses the reaction tRNA(Glu) + L-glutamate + ATP = L-glutamyl-tRNA(Glu) + AMP + diphosphate. Catalyzes the attachment of glutamate to tRNA(Glu) in a two-step reaction: glutamate is first activated by ATP to form Glu-AMP and then transferred to the acceptor end of tRNA(Glu). This is Glutamate--tRNA ligase from Mycoplasmopsis synoviae (strain 53) (Mycoplasma synoviae).